Consider the following 477-residue polypeptide: Putative 4-(hydroxymethyl)benzenesulfonate dehydrogenase TsaD2 (477 aa).

Residues 154–155 (WN), 178–181 (KAAE), and 230–231 (GS) each bind NAD(+). E252 (proton acceptor) is an active-site residue. NAD(+) is bound at residue L253. Catalysis depends on C286, which acts as the Nucleophile. Position 381 (E381) interacts with NAD(+).

This sequence belongs to the aldehyde dehydrogenase family. As to quaternary structure, homodimer.

It carries out the reaction 4-(hydroxymethyl)benzenesulfonate + NAD(+) = 4-formylbenzenesulfonate + NADH + H(+). Its function is as follows. Involved in the toluene-4-sulfonate degradation pathway. Does not discriminate between the sulfonate and the carboxyl substituents and can also be involved in the p-toluenecarboxylate degradation pathway. The sequence is that of Putative 4-(hydroxymethyl)benzenesulfonate dehydrogenase TsaD2 (tsaD2) from Comamonas testosteroni (Pseudomonas testosteroni).